Reading from the N-terminus, the 643-residue chain is Phosphomethylpyrimidine synthase (643 aa).

Residues N248, M277, Y306, H342, 362–364 (SRG), 403–406 (DGLR), and E442 each bind substrate. H446 serves as a coordination point for Zn(2+). Y469 is a substrate binding site. H510 is a Zn(2+) binding site. Residues C590, C593, and C598 each contribute to the [4Fe-4S] cluster site.

This sequence belongs to the ThiC family. Homodimer. The cofactor is [4Fe-4S] cluster.

The enzyme catalyses 5-amino-1-(5-phospho-beta-D-ribosyl)imidazole + S-adenosyl-L-methionine = 4-amino-2-methyl-5-(phosphooxymethyl)pyrimidine + CO + 5'-deoxyadenosine + formate + L-methionine + 3 H(+). Its pathway is cofactor biosynthesis; thiamine diphosphate biosynthesis. Functionally, catalyzes the synthesis of the hydroxymethylpyrimidine phosphate (HMP-P) moiety of thiamine from aminoimidazole ribotide (AIR) in a radical S-adenosyl-L-methionine (SAM)-dependent reaction. The sequence is that of Phosphomethylpyrimidine synthase from Burkholderia ambifaria (strain MC40-6).